A 776-amino-acid polypeptide reads, in one-letter code: Ribosomal RNA large subunit methyltransferase K/L (776 aa).

A THUMP domain is found at 68–183 (DLYKICLWSR…DKQAELYLDL (116 aa)).

The protein belongs to the methyltransferase superfamily. RlmKL family.

The protein resides in the cytoplasm. The catalysed reaction is guanosine(2445) in 23S rRNA + S-adenosyl-L-methionine = N(2)-methylguanosine(2445) in 23S rRNA + S-adenosyl-L-homocysteine + H(+). It catalyses the reaction guanosine(2069) in 23S rRNA + S-adenosyl-L-methionine = N(2)-methylguanosine(2069) in 23S rRNA + S-adenosyl-L-homocysteine + H(+). Functionally, specifically methylates the guanine in position 2445 (m2G2445) and the guanine in position 2069 (m7G2069) of 23S rRNA. This is Ribosomal RNA large subunit methyltransferase K/L from Psychrobacter cryohalolentis (strain ATCC BAA-1226 / DSM 17306 / VKM B-2378 / K5).